The primary structure comprises 490 residues: Serine/threonine-protein kinase PBL35 (490 aa).

Disordered regions lie at residues 1 to 39 and 80 to 103; these read MGFD…RNSE and SAIV…SNAE. A coiled-coil region spans residues 14–39; sequence SKTSNENEKKKKKRRRKKNNNVRNSE. A compositionally biased stretch (basic residues) spans 23–33; that stretch reads KKKKRRRKKNN. The span at 94–103 shows a compositional bias: low complexity; that stretch reads SSTTTTSNAE. One can recognise a Protein kinase domain in the interval 136–422; the sequence is FRPESLLGEG…VEVLKPLPHL (287 aa). Residues 142–150 and Lys174 contribute to the ATP site; that span reads LGEGGFGCV. Tyr219 carries the post-translational modification Phosphotyrosine. The Proton acceptor role is filled by Asp269. Ser273 and Ser303 each carry phosphoserine. 2 positions are modified to phosphothreonine: Thr304 and Thr309. Tyr317 is subject to Phosphotyrosine. Residues 442-490 are disordered; it reads AGSGSGSGRGFGSRNGQPVFRTLSSPHGQAGSSPYRHQIPSPKPKGATT. A compositionally biased stretch (gly residues) spans 444-454; the sequence is SGSGSGRGFGS. Residues 463–473 show a composition bias toward polar residues; that stretch reads TLSSPHGQAGS.

It belongs to the protein kinase superfamily. Ser/Thr protein kinase family. Interacts with SD129. In terms of processing, phosphorylated by SD129 in response to the pathogen-associated molecular pattern (PAMP) 3-OH-C10:0, a medium-chain 3-hydroxy fatty acid.

It is found in the cell membrane. The enzyme catalyses L-seryl-[protein] + ATP = O-phospho-L-seryl-[protein] + ADP + H(+). The catalysed reaction is L-threonyl-[protein] + ATP = O-phospho-L-threonyl-[protein] + ADP + H(+). In terms of biological role, involved in chitin-triggered immune signaling and is required for reactive oxygen species (ROS) production. Acts downstream of SD129 in defense signaling triggered by the pathogen-associated molecular pattern (PAMP) 3-OH-C10:0, a medium-chain 3-hydroxy fatty acid. In Arabidopsis thaliana (Mouse-ear cress), this protein is Serine/threonine-protein kinase PBL35.